A 125-amino-acid chain; its full sequence is Allatostatin (125 aa).

An N-terminal signal peptide occupies residues 1-26 (MKTSAYNVYLGVVAAMLALLFVTINA). A propeptide spanning residues 27-106 (APMEADDETA…SRLARQWRAD (80 aa)) is cleaved from the precursor. The residue at position 109 (Q109) is a Pyrrolidone carboxylic acid.

It belongs to the allatostatin family.

It localises to the secreted. In terms of biological role, strongly inhibits juvenile hormone biosynthesis in vitro by the corpora allata from fifth-stadium larvae and adult females. This chain is Allatostatin, found in Spodoptera frugiperda (Fall armyworm).